We begin with the raw amino-acid sequence, 291 residues long: Bifunctional protein FolD (291 aa).

NADP(+) is bound by residues 166-168 (GAS) and isoleucine 232.

Belongs to the tetrahydrofolate dehydrogenase/cyclohydrolase family. Homodimer.

The enzyme catalyses (6R)-5,10-methylene-5,6,7,8-tetrahydrofolate + NADP(+) = (6R)-5,10-methenyltetrahydrofolate + NADPH. It catalyses the reaction (6R)-5,10-methenyltetrahydrofolate + H2O = (6R)-10-formyltetrahydrofolate + H(+). The protein operates within one-carbon metabolism; tetrahydrofolate interconversion. Functionally, catalyzes the oxidation of 5,10-methylenetetrahydrofolate to 5,10-methenyltetrahydrofolate and then the hydrolysis of 5,10-methenyltetrahydrofolate to 10-formyltetrahydrofolate. The chain is Bifunctional protein FolD from Photorhabdus laumondii subsp. laumondii (strain DSM 15139 / CIP 105565 / TT01) (Photorhabdus luminescens subsp. laumondii).